The sequence spans 244 residues: MSLRLITWDVKDTLLRVRVPVGQQYYAEAKKRGLCVNPGTLETSFRNAYRSHSRLFPNYGLAQGMSSRQWWLDVVLQTFRLSGIEDSDTVQSLAKQLYQDFSTAHNWALVPGAREALDSCTNLGLRMAVISNFDRRLEELLRQCCLERYFDFVVTAESAGVAKPHLGIFHKALSLAKVPPHQAVHVGDDYVNDYCAARMVGMHSYLIHPKTPPKLQWNIPEEHVIQSPEQLIPKLVGVLKNSMT.

The protein belongs to the HAD-like hydrolase superfamily.

The protein is Haloacid dehalogenase-like hydrolase domain-containing protein 3 (hdhd3) of Xenopus laevis (African clawed frog).